The chain runs to 784 residues: Kinesin-like protein Klp68D (784 aa).

One can recognise a Kinesin motor domain in the interval 19–344; that stretch reads CVQVVVRCRP…LRYASRAKSI (326 aa). 106 to 113 lines the ATP pocket; it reads GQTGTGKT. Positions 351–385 form a coiled coil; it reads NEDPQDAKLKEYQEEIERLKRLIGPQQQQRSEKQV. Disordered regions lie at residues 371-449, 605-652, and 742-784; these read RLIG…ERER, KFSS…PSSL, and IKSS…LVNK. Over residues 386 to 396 the composition is skewed to basic residues; that stretch reads TAKKQRVKKPK. Positions 416–428 are enriched in acidic residues; sequence PVEDDSDPEGAES. The stretch at 426–582 forms a coiled coil; the sequence is AESESDKENE…KRQLLIIDNF (157 aa). Basic and acidic residues predominate over residues 429–449; sequence ESDKENEAEVAKSNEELERER. The segment covering 622 to 634 has biased composition (basic residues); sequence SSKRPVSHPQRRR. Over residues 769 to 778 the composition is skewed to low complexity; it reads KKPASAYPKA.

It belongs to the TRAFAC class myosin-kinesin ATPase superfamily. Kinesin family. Kinesin II subfamily. Expressed primarily in the central nervous system and in a subset of the peripheral nervous system during embryogenesis.

Its subcellular location is the cytoplasm. It localises to the cytoskeleton. Its function is as follows. Plus-end directed microtubule motor that may be used for anterograde axonal transport and could conceivably move cargos in fly neurons different than those moved by kinesin heavy chain or other plus-end directed motors. The polypeptide is Kinesin-like protein Klp68D (Klp68D) (Drosophila melanogaster (Fruit fly)).